Reading from the N-terminus, the 418-residue chain is Thyroid hormone receptor alpha-B (418 aa).

Residues methionine 1–aspartate 40 form a disordered region. Positions methionine 1–proline 60 are modulating. 2 consecutive NR C4-type zinc fingers follow at residues cysteine 61–cysteine 81 and cysteine 99–cysteine 123. Residues cysteine 61–methionine 128 constitute a DNA-binding region (nuclear receptor). In terms of domain architecture, NR LBD spans glutamate 171–aspartate 415.

The protein belongs to the nuclear hormone receptor family. NR1 subfamily. As to quaternary structure, binds to thyroid hormone receptor element (TRE) weakly as homodimers and monomers, but binds TRE with much higher affinity as heterodimers with retinoid X receptors. Can bind DNA as a heterodimer with either rxra or rxrg.

The protein localises to the nucleus. In terms of biological role, high affinity receptor for triiodothyronine (T3). The polypeptide is Thyroid hormone receptor alpha-B (thra-b) (Xenopus laevis (African clawed frog)).